The chain runs to 271 residues: Ferric vibriobactin reductase ViuB (271 aa).

The 124-residue stretch at 8–131 (VYPRLLDFVR…IGPGGPDPLI (124 aa)) folds into the FAD-binding FR-type domain.

Belongs to the SIP oxidoreductase family. Requires FAD as cofactor.

It localises to the cytoplasm. The enzyme catalyses 2 a Fe(II)-siderophore + NAD(+) + H(+) = 2 a Fe(III)-siderophore + NADH. Ferric-siderophore reductase involved in iron removal from the siderophores after their transport into the cell. Involved in intracellular removal of iron from iron-vibriobactin complex. Vibriobactin is an iron-chelating compound involved in the transport of iron from the bacterial environment into the cell cytoplasm. Ferric-vibriobactin reductase catalyzing the reduction of Fe(3+)-vibriobactin, a catecholate siderophore synthesized by V.cholerae. This Vibrio cholerae serotype O1 (strain ATCC 39541 / Classical Ogawa 395 / O395) protein is Ferric vibriobactin reductase ViuB.